Reading from the N-terminus, the 239-residue chain is Cell number regulator 6 (239 aa).

Residues 1-10 (MAEDATSSHP) are compositionally biased toward polar residues. Positions 1 to 33 (MAEDATSSHPSRYVKLTKDQDAPAEDIRPGELN) are disordered. Basic and acidic residues predominate over residues 16–29 (LTKDQDAPAEDIRP). The next 2 membrane-spanning stretches (helical) occupy residues 107–127 (CVCH…TAIF) and 136–156 (FLIG…TGIF).

Belongs to the cornifelin family. Expressed in roots, leaves, stalks, apical meristems, immature ears, endosperm, pericarp and tassel spikelets.

The protein localises to the membrane. In Zea mays (Maize), this protein is Cell number regulator 6 (CNR6).